We begin with the raw amino-acid sequence, 988 residues long: Band 4.1-like protein 2 (988 aa).

The disordered stretch occupies residues 1-190 (MTTEVGSASE…GAAKRETKEV (190 aa)). An N-acetylthreonine modification is found at Thr-2. Ser-7 carries the post-translational modification Phosphoserine. A compositionally biased stretch (basic and acidic residues) spans 22–31 (ASKEKAKEVE). Residues Ser-38, Ser-86, and Ser-116 each carry the phosphoserine modification. Composition is skewed to basic and acidic residues over residues 110–148 (ILGK…EAKP) and 160–190 (EEVR…TKEV). Ser-201, Ser-379, Ser-395, Ser-492, Ser-543, Ser-555, Ser-561, and Ser-582 each carry phosphoserine. The region spanning 211–492 (VLAKVTLLDG…EHHTFYRLVS (282 aa)) is the FERM domain. The interval 495–651 (QPPKTKFLTL…TPEPRPSEWE (157 aa)) is hydrophilic. Positions 514-594 (TQAQTREAST…KATPLPAEGK (81 aa)) are disordered. The span at 555–567 (SPPGEGSVPGPGV) shows a compositional bias: low complexity. A Phosphotyrosine modification is found at Tyr-606. A phosphoserine mark is found at Ser-610 and Ser-630. Disordered regions lie at residues 639–788 (MAST…QAGA) and 804–839 (QKLP…VPHL). Residues 652–837 (KRRVTPLPFQ…DPHRVNGEVP (186 aa)) are spectrin--actin-binding. Over residues 673–686 (VEEKKRAEVGKDES) the composition is skewed to basic and acidic residues. Ser-698 is subject to Phosphoserine. Positions 704 to 717 (GETRKVEPVAHKDS) are enriched in basic and acidic residues. The span at 718–729 (TSLSSESSSSSS) shows a compositional bias: low complexity. A compositionally biased stretch (basic and acidic residues) spans 739–751 (QPHHRVTEGTIRE). Thr-745 is subject to Phosphothreonine. Over residues 752–764 (EQEECDEELEEEP) the composition is skewed to acidic residues. Residues 828-839 (DPHRVNGEVPHL) are compositionally biased toward basic and acidic residues. Residues 838-988 (HLDLDGLPEI…ETELAEEGEE (151 aa)) form a C-terminal (CTD) region.

As to quaternary structure, interacts with FCGR1A. Interacts with TRPC4. Interacts (via CTD domain) with FKBP2. Interacts with NUMA1; this interaction is negatively regulated by CDK1 during metaphase and promotes anaphase-specific localization of NUMA1 in symmetrically dividing cells. As to expression, widely expressed.

It localises to the cytoplasm. Its subcellular location is the cytoskeleton. The protein resides in the cell cortex. The protein localises to the cell membrane. Its function is as follows. Required for dynein-dynactin complex and NUMA1 recruitment at the mitotic cell cortex during anaphase. The sequence is that of Band 4.1-like protein 2 from Mus musculus (Mouse).